The sequence spans 2103 residues: Zinc finger SWIM domain-containing protein 8 homolog (2103 aa).

The SWIM-type zinc-finger motif lies at 191 to 227 (FNVAVTFDRRRISSCNCTCTSSAYWCSHVVAVCLHRI). Disordered regions lie at residues 684 to 860 (DGNR…GSTA), 1237 to 1262 (SSNPPVRTRSNQPTRREDHDYGGGSG), 1310 to 1399 (SSGS…IPNQ), 1735 to 1772 (MQMFISAGPPPPPQAYGGYQQPPPQQPPNPQQQQQVVQ), 1786 to 1864 (QQVQ…GVGV), and 1888 to 1916 (PFMQQAPPQPPQQQQPPPSQPPVRQRQPH). Polar residues predominate over residues 724 to 740 (SALTESDSQSSFDAVSH). Low complexity-rich tracts occupy residues 754 to 789 (AVGVEQALSTSDTSSASSSSSSASTASGSSNSSTSS) and 835 to 857 (GRVAMASSGSGSGAGDTVAVGSG). The span at 1237–1249 (SSNPPVRTRSNQP) shows a compositional bias: polar residues. Positions 1320–1351 (GMVPTTNAAGTTGTPSSSSTTVSGSQNPNGNP) are enriched in low complexity. The segment covering 1352 to 1377 (SGSGGGGNGGGGNGGGGGGGGGGGGS) has biased composition (gly residues). Pro residues predominate over residues 1755–1764 (QPPPQQPPNP). Low complexity-rich tracts occupy residues 1786–1813 (QQVQMAGQAPPGHPGQQGHPGQPPSGFQ) and 1820–1835 (AFQALPPQAYQAMQAG). 2 stretches are compositionally biased toward pro residues: residues 1836–1859 (PPGPPMGPPQGYYGPPPPPPPNGP) and 1894–1908 (PPQPPQQQQPPPSQP).

Belongs to the ZSWIM8 family. In terms of assembly, component of the SCF-like E3 ubiquitin-protein ligase complex.

It participates in protein modification; protein ubiquitination. In terms of biological role, substrate recognition component of a SCF-like E3 ubiquitin-protein ligase complex that promotes target-directed microRNA degradation (TDMD), a process that mediates degradation of microRNAs (miRNAs). The SCF-like E3 ubiquitin-protein ligase complex acts by catalyzing ubiquitination and subsequent degradation of AGO1, thereby exposing miRNAs for degradation. This Drosophila melanogaster (Fruit fly) protein is Zinc finger SWIM domain-containing protein 8 homolog.